An 818-amino-acid polypeptide reads, in one-letter code: Beta-glucosidase (818 aa).

The active site involves Asp-222. The PA14 domain occupies 386 to 538 (VFSGEMTVEY…GDAGIAEAVE (153 aa)).

The protein belongs to the glycosyl hydrolase 3 family.

The protein localises to the cytoplasm. It carries out the reaction Hydrolysis of terminal, non-reducing beta-D-glucosyl residues with release of beta-D-glucose.. Functionally, involved in modifying a vir-inducing plant signal molecule. Hydrolyzes coniferin but not cellobiose. This chain is Beta-glucosidase (cbg-1), found in Rhizobium radiobacter (Agrobacterium tumefaciens).